Consider the following 433-residue polypeptide: Bifunctional protein GlmU (433 aa).

Residues 1-226 (MLSVIILAAG…EECFLGVNSQ (226 aa)) are pyrophosphorylase. UDP-N-acetyl-alpha-D-glucosamine-binding positions include 7 to 10 (LAAG), Lys-21, and 80 to 81 (GT). Asp-106 lines the Mg(2+) pocket. UDP-N-acetyl-alpha-D-glucosamine contacts are provided by Gly-138, Glu-152, Asn-167, and Asn-224. Asn-224 serves as a coordination point for Mg(2+). The segment at 227-247 (TERAKAEEIMLERLRKNAMDL) is linker. An N-acetyltransferase region spans residues 248-433 (GVVMQLPSSI…NGYFKFFKKP (186 aa)). Residues Arg-311 and Lys-328 each coordinate UDP-N-acetyl-alpha-D-glucosamine. Residue His-339 is the Proton acceptor of the active site. The UDP-N-acetyl-alpha-D-glucosamine site is built by Tyr-342 and Asn-353. Acetyl-CoA-binding positions include Ala-356, 362-363 (NY), Ser-381, Ser-399, and Arg-416.

In the N-terminal section; belongs to the N-acetylglucosamine-1-phosphate uridyltransferase family. The protein in the C-terminal section; belongs to the transferase hexapeptide repeat family. In terms of assembly, homotrimer. Mg(2+) is required as a cofactor.

The protein resides in the cytoplasm. The enzyme catalyses alpha-D-glucosamine 1-phosphate + acetyl-CoA = N-acetyl-alpha-D-glucosamine 1-phosphate + CoA + H(+). The catalysed reaction is N-acetyl-alpha-D-glucosamine 1-phosphate + UTP + H(+) = UDP-N-acetyl-alpha-D-glucosamine + diphosphate. The protein operates within nucleotide-sugar biosynthesis; UDP-N-acetyl-alpha-D-glucosamine biosynthesis; N-acetyl-alpha-D-glucosamine 1-phosphate from alpha-D-glucosamine 6-phosphate (route II): step 2/2. It participates in nucleotide-sugar biosynthesis; UDP-N-acetyl-alpha-D-glucosamine biosynthesis; UDP-N-acetyl-alpha-D-glucosamine from N-acetyl-alpha-D-glucosamine 1-phosphate: step 1/1. Its pathway is bacterial outer membrane biogenesis; LPS lipid A biosynthesis. In terms of biological role, catalyzes the last two sequential reactions in the de novo biosynthetic pathway for UDP-N-acetylglucosamine (UDP-GlcNAc). The C-terminal domain catalyzes the transfer of acetyl group from acetyl coenzyme A to glucosamine-1-phosphate (GlcN-1-P) to produce N-acetylglucosamine-1-phosphate (GlcNAc-1-P), which is converted into UDP-GlcNAc by the transfer of uridine 5-monophosphate (from uridine 5-triphosphate), a reaction catalyzed by the N-terminal domain. In Helicobacter pylori (strain HPAG1), this protein is Bifunctional protein GlmU.